We begin with the raw amino-acid sequence, 342 residues long: Ribosomal RNA small subunit methyltransferase C (342 aa).

Belongs to the methyltransferase superfamily. RsmC family. Monomer.

It is found in the cytoplasm. It carries out the reaction guanosine(1207) in 16S rRNA + S-adenosyl-L-methionine = N(2)-methylguanosine(1207) in 16S rRNA + S-adenosyl-L-homocysteine + H(+). Functionally, specifically methylates the guanine in position 1207 of 16S rRNA in the 30S particle. The protein is Ribosomal RNA small subunit methyltransferase C of Aeromonas hydrophila subsp. hydrophila (strain ATCC 7966 / DSM 30187 / BCRC 13018 / CCUG 14551 / JCM 1027 / KCTC 2358 / NCIMB 9240 / NCTC 8049).